Here is a 261-residue protein sequence, read N- to C-terminus: Hydroxyethylthiazole kinase (261 aa).

Met-40 is a substrate binding site. ATP is bound by residues Lys-116 and Thr-162. Substrate is bound at residue Gly-189.

Belongs to the Thz kinase family. The cofactor is Mg(2+).

It carries out the reaction 5-(2-hydroxyethyl)-4-methylthiazole + ATP = 4-methyl-5-(2-phosphooxyethyl)-thiazole + ADP + H(+). It participates in cofactor biosynthesis; thiamine diphosphate biosynthesis; 4-methyl-5-(2-phosphoethyl)-thiazole from 5-(2-hydroxyethyl)-4-methylthiazole: step 1/1. Catalyzes the phosphorylation of the hydroxyl group of 4-methyl-5-beta-hydroxyethylthiazole (THZ). The polypeptide is Hydroxyethylthiazole kinase (Methanosarcina mazei (strain ATCC BAA-159 / DSM 3647 / Goe1 / Go1 / JCM 11833 / OCM 88) (Methanosarcina frisia)).